Consider the following 253-residue polypeptide: Triosephosphate isomerase (253 aa).

12–14 (NWK) serves as a coordination point for substrate. Histidine 100 serves as the catalytic Electrophile. The Proton acceptor role is filled by glutamate 170. Residues glycine 176, serine 215, and 236–237 (GG) each bind substrate.

This sequence belongs to the triosephosphate isomerase family. Homodimer.

It localises to the cytoplasm. It catalyses the reaction D-glyceraldehyde 3-phosphate = dihydroxyacetone phosphate. The protein operates within carbohydrate biosynthesis; gluconeogenesis. It participates in carbohydrate degradation; glycolysis; D-glyceraldehyde 3-phosphate from glycerone phosphate: step 1/1. In terms of biological role, involved in the gluconeogenesis. Catalyzes stereospecifically the conversion of dihydroxyacetone phosphate (DHAP) to D-glyceraldehyde-3-phosphate (G3P). This is Triosephosphate isomerase from Rhodopseudomonas palustris (strain BisA53).